Here is a 168-residue protein sequence, read N- to C-terminus: Peptide methionine sulfoxide reductase MsrA 2 (168 aa).

The active site involves Cys11.

The protein belongs to the MsrA Met sulfoxide reductase family.

It catalyses the reaction L-methionyl-[protein] + [thioredoxin]-disulfide + H2O = L-methionyl-(S)-S-oxide-[protein] + [thioredoxin]-dithiol. The catalysed reaction is [thioredoxin]-disulfide + L-methionine + H2O = L-methionine (S)-S-oxide + [thioredoxin]-dithiol. In terms of biological role, has an important function as a repair enzyme for proteins that have been inactivated by oxidation. Catalyzes the reversible oxidation-reduction of methionine sulfoxide in proteins to methionine. This is Peptide methionine sulfoxide reductase MsrA 2 from Rhodopirellula baltica (strain DSM 10527 / NCIMB 13988 / SH1).